A 420-amino-acid chain; its full sequence is LanC-like protein 3 (420 aa).

This sequence belongs to the LanC-like protein family.

The sequence is that of LanC-like protein 3 (LANCL3) from Homo sapiens (Human).